Consider the following 359-residue polypeptide: 4-galactosyl-N-acetylglucosaminide 3-alpha-L-fucosyltransferase 9 (359 aa).

At 1-11 the chain is on the cytoplasmic side; it reads MTSTSKGILRP. A helical; Signal-anchor for type II membrane protein transmembrane segment spans residues 12-32; it reads FLIVCIILGCFMACLLIYIKP. Residues 33–359 lie on the Lumenal side of the membrane; it reads TNSWVFSPME…VGNLEKWFWN (327 aa). Residue N62 is glycosylated (N-linked (GlcNAc...) asparagine). The interval 63–168 is acceptor-binding; sequence ETTILVWVWP…RRDSDIQVPY (106 aa). Residue Q75 participates in a beta-D-galactosyl-(1-&gt;4)-N-acetyl-beta-D-glucosaminyl derivative binding. Disulfide bonds link C82/C335, C91/C338, and C190/C238. The N-linked (GlcNAc...) asparagine glycan is linked to N101. A beta-D-galactosyl-(1-&gt;4)-N-acetyl-beta-D-glucosaminyl derivative is bound at residue E137. E137 acts as the Nucleophile in catalysis. A GDP-beta-L-fucose-binding site is contributed by E137. A glycan (N-linked (GlcNAc...) asparagine) is linked at N153. GDP-beta-L-fucose is bound by residues Y168, V192, S194, N195, R202, V226, Y241, N246, Y252, E255, and K256. The interval 169–326 is donor-binding; it reads GFLTVSTNPF…NWRKDFTVNL (158 aa). The segment at 327–359 is acceptor-binding; the sequence is PRFWESHACLACDHVKRHQEYKSVGNLEKWFWN.

The protein belongs to the glycosyltransferase 10 family. Homodimer. N-glycosylated with complex-type N-glycans. In terms of tissue distribution, mainly detected in brain and kidney.

It localises to the golgi apparatus. Its subcellular location is the trans-Golgi network membrane. The protein localises to the golgi apparatus membrane. It carries out the reaction a beta-D-galactosyl-(1-&gt;4)-N-acetyl-beta-D-glucosaminyl derivative + GDP-beta-L-fucose = a beta-D-galactosyl-(1-&gt;4)-[alpha-L-fucosyl-(1-&gt;3)]-N-acetyl-beta-D-glucosaminyl derivative + GDP + H(+). It catalyses the reaction an alpha-Neu5Ac-(2-&gt;3)-beta-D-Gal-(1-&gt;4)-beta-D-GlcNAc-(1-&gt;3)-beta-D-Gal-(1-&gt;4)-beta-D-GlcNAc derivative + GDP-beta-L-fucose = an alpha-Neu5Ac-(2-&gt;3)-beta-D-Gal-(1-&gt;4)-beta-D-GlcNAc-(1-&gt;3)-beta-D-Gal-(1-&gt;4)-[alpha-L-Fuc-(1-&gt;3)]-beta-D-GlcNAc derivative + GDP + H(+). The enzyme catalyses alpha-N-glycoloylneuraminosyl-(2-&gt;3)-beta-D-galactosyl-(1-&gt;4)-N-acetyl-beta-D-glucosaminyl-(1-&gt;3)-beta-D-galactosyl-(1-&gt;4)-N-acetyl-beta-D-glucosaminyl-(1-&gt;3)-beta-D-galactosyl-(1-&gt;4)-beta-D-glucosyl-(1&lt;-&gt;1')-ceramide + GDP-beta-L-fucose = alpha-N-glycoloylneuraminosyl-(2-&gt;3)-beta-D-galactosyl-(1-&gt;4)-N-acetyl-beta-D-glucosaminyl-(1-&gt;3)-beta-D-galactosyl-(1-&gt;4)-[alpha-L-fucosyl-(1-&gt;3)]-N-acetyl-beta-D-glucosaminyl-(1-&gt;3)-beta-D-galactosyl-(1-&gt;4)-beta-D-glucosyl-(1&lt;-&gt;1')-ceramide + GDP + H(+). The catalysed reaction is alpha-D-galactosyl-(1-&gt;3)-beta-D-galactosyl-(1-&gt;4)-N-acetyl-beta-D-glucosaminyl-(1-&gt;3)-beta-D-galactosyl-(1-&gt;4)-beta-D-glucosyl-(1&lt;-&gt;1')-ceramide + GDP-beta-L-fucose = a neolactoside IV(3)-alpha-Gal,III(3)-alpha-Fuc-nLc4Cer + GDP + H(+). It carries out the reaction a neolactoside nLc4Cer + GDP-beta-L-fucose = a neolactoside III(3)-alpha-Fuc-nLc4Cer + GDP + H(+). It catalyses the reaction an N-acetyl-alpha-neuraminyl-(2-&gt;3)-beta-D-galactosyl-(1-&gt;4)-N-acetyl-beta-D-glucosaminyl derivative + GDP-beta-L-fucose = an alpha-Neu5Ac-(2-&gt;3)-beta-D-Gal-(1-&gt;4)-[alpha-L-Fuc-(1-&gt;3)]-beta-D-GlcNAc derivative + GDP + H(+). The enzyme catalyses beta-D-Gal-(1-&gt;4)-beta-D-GlcNAc-(1-&gt;3)-beta-D-Gal-(1-&gt;4)-D-Glc + GDP-beta-L-fucose = beta-D-Gal-(1-&gt;4)-[alpha-L-Fuc-(1-&gt;3)]-beta-D-GlcNAc-(1-&gt;3)-beta-D-Gal-(1-&gt;4)-D-Glc + GDP + H(+). The catalysed reaction is an alpha-L-Fuc-(1-&gt;2)-beta-D-Gal-(1-&gt;4)-beta-D-GlcNAc derivative + GDP-beta-L-fucose = an alpha-L-Fuc-(1-&gt;2)-beta-D-Gal-(1-&gt;4)-[alpha-L-Fuc-(1-&gt;3)]-beta-D-GlcNAc derivative + GDP + H(+). The protein operates within protein modification; protein glycosylation. It participates in glycolipid biosynthesis. With respect to regulation, activated by Mn2+. Functionally, catalyzes alpha(1-&gt;3) linkage of fucosyl moiety transferred from GDP-beta-L-fucose to N-acetyl glucosamine (GlcNAc) within type 2 lactosamine (LacNAc, beta-D-Gal-(1-&gt;4)-beta-D-GlcNAc-) glycan attached to glycolipids and N- or O-linked glycoproteins. Fucosylates distal type 2 LacNAc and its fucosylated (H-type 2 LacNAc) and sialylated (sialyl-type 2 LacNAc) derivatives to form Lewis x (Lex) (CD15) and Lewis y (Ley) antigenic epitopes involved in cell adhesion and differentiation. Generates Lex epitopes in the brain, presumably playing a role in the maintenance of neuronal stemness and neurite outgrowth in progenitor neural cells. Fucosylates the internal type 2 LacNAc unit of the polylactosamine chain to form VIM-2 antigen that serves as recognition epitope for SELE. Can also modify milk oligosaccharides in particular type 2 tetrasaccharide LNnT. This Mus musculus (Mouse) protein is 4-galactosyl-N-acetylglucosaminide 3-alpha-L-fucosyltransferase 9.